Reading from the N-terminus, the 143-residue chain is Putative phosphotransferase IIA component SgcA (143 aa).

In terms of domain architecture, PTS EIIA type-2 spans 1–143; that stretch reads MINDIKWVQA…DDALFALVSG (143 aa). The Tele-phosphohistidine intermediate role is filled by His63.

The protein localises to the cytoplasm. The phosphoenolpyruvate-dependent sugar phosphotransferase system (sugar PTS), a major carbohydrate active -transport system, catalyzes the phosphorylation of incoming sugar substrates concomitantly with their translocation across the cell membrane. The protein is Putative phosphotransferase IIA component SgcA (sgcA) of Escherichia coli (strain K12).